A 356-amino-acid chain; its full sequence is Tyrosine recombinase XerS (356 aa).

The Core-binding (CB) domain occupies 16-121 (LMPWYVLEYY…ALSSLYKYLT (106 aa)). One can recognise a Tyr recombinase domain in the interval 169–354 (GFLTYIDQEH…VNDEQKNALD (186 aa)). Residues arginine 210, lysine 234, histidine 306, arginine 309, and histidine 332 contribute to the active site. The active-site O-(3'-phospho-DNA)-tyrosine intermediate is tyrosine 341.

Belongs to the 'phage' integrase family. XerS subfamily.

It is found in the cytoplasm. FtsK is required for recombination. Its function is as follows. Site-specific tyrosine recombinase, which acts by catalyzing the cutting and rejoining of the recombining DNA molecules. Essential to convert dimers of the bacterial chromosome into monomers to permit their segregation at cell division. This is Tyrosine recombinase XerS from Streptococcus pneumoniae (strain P1031).